The primary structure comprises 892 residues: Nitrogen assimilation transcription factor nirA (892 aa).

The tract at residues 1–32 (MGEKLDPELSSDGPHTKSSSKGQGTSTDNAPA) is disordered. Residues 16–27 (TKSSSKGQGTST) show a composition bias toward low complexity. A DNA-binding region (zn(2)-C6 fungal-type) is located at residues 42–70 (CIACRRRKSKCDGNLPSCAACSSVYHTTC). Disordered regions lie at residues 646 to 714 (GPWD…SGPV), 731 to 761 (AHNE…SAQE), and 842 to 892 (PNIP…SFQR). A compositionally biased stretch (low complexity) spans 649 to 674 (DQAASPSTTSDSPPSVSSQSVVATTD). 3 stretches are compositionally biased toward polar residues: residues 675 to 714 (LSQP…SGPV), 746 to 761 (VSTS…SAQE), and 876 to 892 (NVNS…SFQR).

It is found in the nucleus. Its function is as follows. Pathway-specific regulatory gene of nitrate assimilation; it activates the transcription of the genes for nitrate and nitrite reductases (niaD and niiA). The polypeptide is Nitrogen assimilation transcription factor nirA (nirA) (Emericella nidulans (strain FGSC A4 / ATCC 38163 / CBS 112.46 / NRRL 194 / M139) (Aspergillus nidulans)).